Reading from the N-terminus, the 75-residue chain is Stewaprin-a (75 aa).

An N-terminal signal peptide occupies residues 1-24 (MSSGGLLLLLGLLTLWAELIPVSG). The WAP domain occupies 27–72 (HPKKPGLCPPRPQKPPCVRECKNDWSCPGEQKCCRYGCIFECRDPI). Disulfide bonds link Cys-34–Cys-60, Cys-43–Cys-64, Cys-47–Cys-59, and Cys-53–Cys-68.

This sequence belongs to the venom waprin family. Expressed by the venom gland.

The protein localises to the secreted. Functionally, damages membranes of susceptible bacteria. Has no hemolytic activity. Not toxic to mice. Does not inhibit the proteinases elastase and cathepsin G. This Hoplocephalus stephensii (Stephens's banded snake) protein is Stewaprin-a.